The sequence spans 273 residues: Putative inactive beta-glucuronidase protein GUSBP11 (273 aa).

The tract at residues 1–20 (MTAAETGRGKPRLGGGSGLG) is disordered.

It belongs to the glycosyl hydrolase 2 family.

This is Putative inactive beta-glucuronidase protein GUSBP11 (GUSBP11) from Homo sapiens (Human).